The primary structure comprises 3253 residues: tRNA nuclease CdiA (3253 aa).

The first 32 residues, Met-1–Ala-32, serve as a signal peptide directing secretion. The two-partner system transport domain (TPS) stretch occupies residues Pro-36–Thr-322. Residues Gly-351–Asn-1384 form an FHA-1 region. The receptor binding domain (RBD) stretch occupies residues Gln-1385–Asn-1656. A YP domain region spans residues Tyr-1657–Asn-1841. The tract at residues Gly-1842–Asn-1902 is periplasmic FHA-1 repeat (pFR). The segment at Thr-1944–Ser-2548 is FHA-2. Disordered regions lie at residues Gly-2228 to Ser-2252, Thr-2362 to Arg-2410, Gly-2483 to Val-2503, and Ile-2687 to Ser-2712. Composition is skewed to polar residues over residues Gly-2240–Ser-2252, Thr-2368–Val-2403, and Thr-2490–Val-2503. The interval Ser-2888–Ala-2930 is pretoxin (PT) domain. Residues Val-2931–Asn-2934 carry the VDNN CT cleavage motif motif. The segment at Val-2931–Lys-3253 is C-terminal effector domain (CT).

This sequence in the N-terminal section; belongs to the CdiA toxin family. In the C-terminal section; belongs to the bacterial EndoU family. In terms of assembly, forms a 1:1 complex with cognate immunity protein CdiI-STECO31. The cofactor is tRNase activity is metal-independent.. Post-translationally, the CT domain is cleaved upon binding to receptor Tsx on target cells.

Its subcellular location is the secreted. It localises to the target cell. The protein localises to the target cell cytoplasm. Its function is as follows. Toxic component of a toxin-immunity protein module, which functions as a cellular contact-dependent growth inhibition (CDI) system. CDI modules allow bacteria to communicate with and inhibit the growth of closely related neighboring target bacteria in a contact-dependent fashion (target cell counts decrease 1000- to 10000-fold with this CDI). Uses outer membrane nucleoside transporter Tsx on target cells as a receptor. Gains access to the cytoplasm of target cells by using integral inner membrane protein PTS system glucose-specific EIICB component (ptsG). Targeting of the C-terminal domain (CT) domain (residues 2931-3253) in the absence of immunity protein inhibits cell growth and causes tRNA(UUC-Glu) cleavage; expression of cognate immunity protein CdiI-STECO31 neutralizes growth inhibition leaving tRNA(UUC-Glu) is intact, whereas non-cognate immunity proteins do not confer protection. The CT domain cleaves tRNA; it is most active against tRNA(UUC-Glu), but also has modest activity against tRNA(GUC-Asp), tRNA(UUG-Gln), tRNA(CCC-Gly), tRNA(UCC-Gly), tRNA(GCC-Gly), tRNA(UUU-Lys), tRNA(GGU-Thr) and tRNA(CCA-Trp); tRNA cleavage is inhibited by cognate immunity protein CdiI. Cleavage of tRNA(UUC-Glu) occurs in the anticodon loop between cytosine(37) and 2-methyladenosine(38) (C37-m2A38) and probably also occurs in the anticodon loop of other tRNAs as well. Functionally, the CdiA protein is thought to be exported from the cell through the central lumen of CdiB, the other half of its two-partner system (TPS). The TPS domain probably remains associated with CdiB while the FHA-1 domain forms an extended filament (33 nm long) with the receptor-binding domain (RBD) at its extremity; in the secretion arrested state the C-terminus of the RBD and YP domains form a hairpin-like structure as the FHA-2, PT and CT domains are periplasmic. The YP domain is probably responsible for this arrest at the point where it re-enters the host cell periplasm. Upon binding to a target cell outer membrane receptor (Tsx for this CDI) a signal is transmitted to activate secretion. The filament becomes about 5 nm longer, the rest of CdiA is secreted and the FHA-2 domain becomes stably associated with the target cell's outer membrane where it facilitates entry of the toxic CT domain into the target cell periplasm. From there the toxic CT domain is cleaved and gains access to the target cell cytoplasm via an inner membrane protein (PTS system glucose-specific EIICB component, ptsG for this CDI). The polypeptide is tRNA nuclease CdiA (Escherichia coli (strain STEC_O31)).